Consider the following 431-residue polypeptide: Ribosomal protein uS12 methylthiotransferase RimO (431 aa).

In terms of domain architecture, MTTase N-terminal spans 4-120; the sequence is LKLYVIVLGC…LAESINKTKK (117 aa). Cys-13, Cys-49, Cys-83, Cys-150, Cys-154, and Cys-157 together coordinate [4Fe-4S] cluster. The Radical SAM core domain maps to 136–365; sequence DSDLPYAYVK…MEVQAEISFL (230 aa). A TRAM domain is found at 368–431; that stretch reads QRLVGKVIDV…TYDLEGELVE (64 aa).

The protein belongs to the methylthiotransferase family. RimO subfamily. Requires [4Fe-4S] cluster as cofactor.

It is found in the cytoplasm. It carries out the reaction L-aspartate(89)-[ribosomal protein uS12]-hydrogen + (sulfur carrier)-SH + AH2 + 2 S-adenosyl-L-methionine = 3-methylsulfanyl-L-aspartate(89)-[ribosomal protein uS12]-hydrogen + (sulfur carrier)-H + 5'-deoxyadenosine + L-methionine + A + S-adenosyl-L-homocysteine + 2 H(+). Its function is as follows. Catalyzes the methylthiolation of an aspartic acid residue of ribosomal protein uS12. The protein is Ribosomal protein uS12 methylthiotransferase RimO of Fervidobacterium nodosum (strain ATCC 35602 / DSM 5306 / Rt17-B1).